Reading from the N-terminus, the 352-residue chain is Cyclin-O (352 aa).

The disordered stretch occupies residues 1–40; the sequence is MVTPCPASPGSPAAGAGRRDSHQNLRAPVKKSRRPCLRRK. Positions 28–40 are enriched in basic residues; it reads PVKKSRRPCLRRK. S83 carries the post-translational modification Phosphoserine.

The protein belongs to the cyclin family. In terms of tissue distribution, present in respiratory cells (at protein level). Expressed in multiciliated tissue in brain and fallopian tube (at protein level). Highly expressed in oocytes.

It localises to the cytoplasm. The protein localises to the nucleus. Its subcellular location is the nucleolus. Specifically required for generation of multiciliated cells, possibly by promoting a cell cycle state compatible with centriole amplification and maturation. Acts downstream of MCIDAS to promote mother centriole amplification and maturation in preparation for apical docking. May be involved in apoptosis in lymphoid cells; however, this result requires additional evidences in vivo. May be involved in oocyte meiotic resumption in oocytes. This Mus musculus (Mouse) protein is Cyclin-O.